The primary structure comprises 488 residues: 3-octaprenyl-4-hydroxybenzoate carboxy-lyase (488 aa).

Residue Asn172 participates in Mn(2+) binding. Prenylated FMN-binding positions include 175 to 177, 189 to 191, and 194 to 195; these read IYR, RWL, and RG. Glu238 is a Mn(2+) binding site. Asp287 functions as the Proton donor in the catalytic mechanism.

It belongs to the UbiD family. Homohexamer. Prenylated FMN is required as a cofactor. Mn(2+) serves as cofactor.

The protein localises to the cell membrane. It catalyses the reaction a 4-hydroxy-3-(all-trans-polyprenyl)benzoate + H(+) = a 2-(all-trans-polyprenyl)phenol + CO2. It participates in cofactor biosynthesis; ubiquinone biosynthesis. In terms of biological role, catalyzes the decarboxylation of 3-octaprenyl-4-hydroxy benzoate to 2-octaprenylphenol, an intermediate step in ubiquinone biosynthesis. The polypeptide is 3-octaprenyl-4-hydroxybenzoate carboxy-lyase (Pseudomonas syringae pv. tomato (strain ATCC BAA-871 / DC3000)).